Reading from the N-terminus, the 686-residue chain is AsmA family protein YhjG (686 aa).

Over 1 to 6 the chain is Cytoplasmic; it reads MSKAGK. Residues 7 to 27 form a helical membrane-spanning segment; it reads ITAAISGAFLLLIVVAIILIA. The Periplasmic segment spans residues 28-686; sequence TFDWNRLKPT…CRTILSQMKK (659 aa). Positions 372-396 are disordered; sequence VDSGKGAEKSKRSEQKKGEKSVQPA. Basic and acidic residues predominate over residues 376-391; that stretch reads KGAEKSKRSEQKKGEK.

The protein belongs to the AsmA family.

The protein resides in the cell inner membrane. This chain is AsmA family protein YhjG (yhjG), found in Escherichia coli (strain K12).